Here is a 279-residue protein sequence, read N- to C-terminus: Monoacylglycerol lipase (279 aa).

The active-site Nucleophile is S110. Active-site charge relay system residues include D226 and H256.

It belongs to the AB hydrolase superfamily. In terms of assembly, monomer.

It is found in the secreted. It localises to the cell wall. It catalyses the reaction a 1-acylglycerol + H2O = glycerol + a fatty acid + H(+). The catalysed reaction is Hydrolyzes glycerol monoesters of long-chain fatty acids.. The enzyme catalyses 1-butyrylglycerol + H2O = butanoate + glycerol + H(+). It carries out the reaction 1-octanoylglycerol + H2O = octanoate + glycerol + H(+). It catalyses the reaction 1-decanoylglycerol + H2O = decanoate + glycerol + H(+). The catalysed reaction is 1-dodecanoylglycerol + H2O = dodecanoate + glycerol + H(+). The enzyme catalyses 1-tetradecanoylglycerol + H2O = tetradecanoate + glycerol + H(+). It carries out the reaction 1-(9Z-octadecenoyl)-glycerol + H2O = glycerol + (9Z)-octadecenoate + H(+). It catalyses the reaction 2-(9Z-octadecenoyl)-glycerol + H2O = glycerol + (9Z)-octadecenoate + H(+). Its activity is regulated as follows. Inhibited by the serine esterase inhibitors PMSF (100%), E600 (80%) and THL (22%). Virtual screening identified a tautomer of ZINC13451138, known inhibitor for HIV-1 integrase, as a potential inhibitor. Its function is as follows. Involved in the hydrolysis of exogenous host lipids during chronic infection. Catalyzes the hydrolysis of both monoacylglycerols (MAG) and diacylglycerols (DAG), with a preference for MAG. It hydrolyzes 2-MAG, 1-3-MAG and MAG with short, medium and long chain fatty acids such as 1-monobutyroyl-rac-glycerol (MC4), 1-mono-octanoyl-rac-glycerol (MC8), 1-monodecanoyl-rac-glycerol (MC10), 1-monolauroyl-rac-glycerol (MC12), 1-monomyristoyl-rac-glycerol (MC14) and 1-mono-oleyl-rac-glycerol (MC18:1). Also able to hydrolyze DAG with short (DiC6) and medium (DiC10) fatty acid chains, but not with longest fatty acid chains. Can also hydrolyze vinyl laurate (VC12), vinyl butyrate (VC4) and vinyl propionate (VC3). Induces an inflammatory response and cell apoptosis in the host cells. Increases expression of IL-6, NF-kappaB, TLR-2, TLR-6, TNF-alpha, and MyD88 in mouse alveolar macrophage RAW264.7 cells. Persistent expression induces RAW264.7 cell apoptosis in vitro. This Mycobacterium tuberculosis (strain ATCC 25618 / H37Rv) protein is Monoacylglycerol lipase.